Consider the following 174-residue polypeptide: Phosphopantetheine adenylyltransferase (174 aa).

Residue T10 participates in substrate binding. ATP contacts are provided by residues 10–11 and H18; that span reads TF. The substrate site is built by K44, L76, and R90. Residues 91 to 93, E101, and 126 to 132 each bind ATP; these read GLR and HAYISSS.

This sequence belongs to the bacterial CoaD family. Homohexamer. The cofactor is Mg(2+).

It is found in the cytoplasm. It catalyses the reaction (R)-4'-phosphopantetheine + ATP + H(+) = 3'-dephospho-CoA + diphosphate. Its pathway is cofactor biosynthesis; coenzyme A biosynthesis; CoA from (R)-pantothenate: step 4/5. In terms of biological role, reversibly transfers an adenylyl group from ATP to 4'-phosphopantetheine, yielding dephospho-CoA (dPCoA) and pyrophosphate. The sequence is that of Phosphopantetheine adenylyltransferase from Alkalilimnicola ehrlichii (strain ATCC BAA-1101 / DSM 17681 / MLHE-1).